A 160-amino-acid polypeptide reads, in one-letter code: Phosphopantetheine adenylyltransferase (160 aa).

Position 10 (threonine 10) interacts with substrate. ATP is bound by residues 10–11 and histidine 18; that span reads TF. 3 residues coordinate substrate: lysine 42, leucine 74, and arginine 88. ATP-binding positions include 89–91, glutamate 99, and 124–130; these read GLR and NSFISST.

Belongs to the bacterial CoaD family. As to quaternary structure, homohexamer. Mg(2+) is required as a cofactor.

The protein resides in the cytoplasm. The enzyme catalyses (R)-4'-phosphopantetheine + ATP + H(+) = 3'-dephospho-CoA + diphosphate. The protein operates within cofactor biosynthesis; coenzyme A biosynthesis; CoA from (R)-pantothenate: step 4/5. In terms of biological role, reversibly transfers an adenylyl group from ATP to 4'-phosphopantetheine, yielding dephospho-CoA (dPCoA) and pyrophosphate. This is Phosphopantetheine adenylyltransferase from Shewanella piezotolerans (strain WP3 / JCM 13877).